The chain runs to 292 residues: Trimeric intracellular cation channel type B (292 aa).

Topologically, residues Met-1–Ser-16 are lumenal. The helical transmembrane segment at Met-17–Lys-34 threads the bilayer. Residues Gln-35–Pro-47 are Cytoplasmic-facing. A helical transmembrane segment spans residues Leu-48–Leu-69. Residues Ala-70–Asn-82 are Lumenal-facing. The chain crosses the membrane as a helical span at residues Ile-83–Leu-100. Residues Val-101–Gln-103 lie on the Cytoplasmic side of the membrane. A helical membrane pass occupies residues Gly-104–Arg-122. A 1,2-diacyl-sn-glycero-3-phospho-(1D-myo-inositol-4,5-bisphosphate)-binding residues include Lys-118 and Arg-122. Over Thr-123 to Ala-140 the chain is Lumenal. The chain crosses the membrane as a helical span at residues Trp-141–Val-158. The Cytoplasmic portion of the chain corresponds to Thr-159–Lys-178. A helical transmembrane segment spans residues Met-179–Phe-195. At Gln-196–His-206 the chain is on the lumenal side. Residues Asp-207–Met-225 form a helical membrane-spanning segment. Residues Thr-226–Asp-292 lie on the Cytoplasmic side of the membrane. The segment at Arg-248–Asp-292 is disordered. Residues Ser-265 to Ser-274 show a composition bias toward low complexity.

The protein belongs to the TMEM38 family. In terms of assembly, homotrimer; conformation seems to be controled by binding to diacylglycerol (DAG). As to expression, widely expressed.

The protein resides in the endoplasmic reticulum membrane. The catalysed reaction is K(+)(in) = K(+)(out). Its activity is regulated as follows. Channel activity is activated by increased cytosolic Ca(2+) levels and blocked by luminal high Ca(2+) levels. In terms of biological role, intracellular monovalent cation channel required for maintenance of rapid intracellular calcium release. Acts as a potassium counter-ion channel that functions in synchronization with calcium release from intracellular stores. Activated by increased cytosolic Ca(2+) levels. The chain is Trimeric intracellular cation channel type B (Tmem38b) from Mus musculus (Mouse).